We begin with the raw amino-acid sequence, 70 residues long: Large ribosomal subunit protein eL38 (70 aa).

Belongs to the eukaryotic ribosomal protein eL38 family.

The protein is Large ribosomal subunit protein eL38 (RpL38) of Anopheles gambiae (African malaria mosquito).